The following is a 255-amino-acid chain: tRNA1(Val) (adenine(37)-N6)-methyltransferase (255 aa).

The protein belongs to the methyltransferase superfamily. tRNA (adenine-N(6)-)-methyltransferase family.

The protein localises to the cytoplasm. It carries out the reaction adenosine(37) in tRNA1(Val) + S-adenosyl-L-methionine = N(6)-methyladenosine(37) in tRNA1(Val) + S-adenosyl-L-homocysteine + H(+). Specifically methylates the adenine in position 37 of tRNA(1)(Val) (anticodon cmo5UAC). The protein is tRNA1(Val) (adenine(37)-N6)-methyltransferase of Porphyromonas gingivalis (strain ATCC 33277 / DSM 20709 / CIP 103683 / JCM 12257 / NCTC 11834 / 2561).